We begin with the raw amino-acid sequence, 305 residues long: Ribonuclease BN (305 aa).

Residues His64, His66, Asp68, His69, His141, Asp212, and His270 each coordinate Zn(2+). The active-site Proton acceptor is Asp68.

Belongs to the RNase Z family. RNase BN subfamily. As to quaternary structure, homodimer. It depends on Zn(2+) as a cofactor.

Its function is as follows. Zinc phosphodiesterase, which has both exoribonuclease and endoribonuclease activities. This Escherichia coli O157:H7 protein is Ribonuclease BN.